Here is a 218-residue protein sequence, read N- to C-terminus: uncharacterized protein (218 aa).

A chloroplast-targeting transit peptide spans 1–28; sequence MLSLQCLPPFFISVPNRSTNSCSTAPLR.

This sequence belongs to the SixA phosphatase family.

The protein localises to the plastid. It localises to the chloroplast. This is an uncharacterized protein from Arabidopsis thaliana (Mouse-ear cress).